Reading from the N-terminus, the 483-residue chain is tRNA-2-methylthio-N(6)-dimethylallyladenosine synthase (483 aa).

Residues 31 to 148 (KKLYIETQGC…LPQMLDQHQD (118 aa)) form the MTTase N-terminal domain. Cys40, Cys77, Cys111, Cys192, Cys196, and Cys199 together coordinate [4Fe-4S] cluster. A Radical SAM core domain is found at 178-410 (RVEGFKAFVS…QHWIKQSSIR (233 aa)). In terms of domain architecture, TRAM spans 413–477 (DAMQGTIQRV…LNLVYGELLN (65 aa)).

Belongs to the methylthiotransferase family. MiaB subfamily. Monomer. [4Fe-4S] cluster is required as a cofactor.

It localises to the cytoplasm. The catalysed reaction is N(6)-dimethylallyladenosine(37) in tRNA + (sulfur carrier)-SH + AH2 + 2 S-adenosyl-L-methionine = 2-methylsulfanyl-N(6)-dimethylallyladenosine(37) in tRNA + (sulfur carrier)-H + 5'-deoxyadenosine + L-methionine + A + S-adenosyl-L-homocysteine + 2 H(+). In terms of biological role, catalyzes the methylthiolation of N6-(dimethylallyl)adenosine (i(6)A), leading to the formation of 2-methylthio-N6-(dimethylallyl)adenosine (ms(2)i(6)A) at position 37 in tRNAs that read codons beginning with uridine. This chain is tRNA-2-methylthio-N(6)-dimethylallyladenosine synthase, found in Acinetobacter baylyi (strain ATCC 33305 / BD413 / ADP1).